Here is a 460-residue protein sequence, read N- to C-terminus: NADH-ubiquinone oxidoreductase chain 4 (460 aa).

Helical transmembrane passes span 22–42 (WLWPTALTQSMLIALGSITWL), 61–81 (PLSTPLLVLSCWLLPLMLLAS), 94–113 (RMYITLLATLQLFLILAFGA), 117–139 (IMFYVMFEATLIPTLLVITRWGN), 148–168 (TYFLFYTLAGSLPLLVALLML), 195–217 (IWWAACMIAFLVKMPLYGMHLWL), 225–245 (PVAGSMVLAAVLLKLGGYGMM), 258–278 (MVYPFIVLALWGVIITGSICL), 285–304 (SLIAYSSVSHMGLVAGGILI), 308–330 (WGFTGALILMIAHGLASSALFCL), 351–371 (IALPLMTTWWFIASLANLALP), 394–414 (LILTGIGTLITAAYSLYMFLM), and 436–456 (LLMALHLIPLLLIILKPALLW).

Belongs to the complex I subunit 4 family.

The protein localises to the mitochondrion membrane. The catalysed reaction is a ubiquinone + NADH + 5 H(+)(in) = a ubiquinol + NAD(+) + 4 H(+)(out). Functionally, core subunit of the mitochondrial membrane respiratory chain NADH dehydrogenase (Complex I) that is believed to belong to the minimal assembly required for catalysis. Complex I functions in the transfer of electrons from NADH to the respiratory chain. The immediate electron acceptor for the enzyme is believed to be ubiquinone. The polypeptide is NADH-ubiquinone oxidoreductase chain 4 (MT-ND4) (Gadus morhua (Atlantic cod)).